The primary structure comprises 700 residues: MAGIAIKLAKDREAAEGLGSHERAIKYLNQDYETLRNECLEAGALFQDPSFPALPSSLGYKELGPYSSKTRGIEWKRPTEICADPQFIIGGATRTDICQGALGDCWLLAAIASLTLNEEILARVVPPDQSFQENYAGIFHFQFWQYGEWVEVVVDDRLPTKDGELLFVHSAEGSEFWSALLEKAYAKINGCYEALSGGATTEGFEDFTGGIAEWYELRKPPPNLFKIIQKALEKGSLLGCSIDITSAADSEAVTYQKLVKGHAYSVTGAEEVESSGSLQKLIRIRNPWGQVEWTGKWNDNCPSWNTVDPEVRANLTERQEDGEFWMSFSDFLRHYSRLEICNLTPDTLTCDSYKKWKLTKMDGNWRRGSTAGGCRNYPNTFWMNPQYLIKLEEEDEDEEDGERGCTFLVGLIQKHRRRQRKMGEDMHTIGFGIYEVPEELTGQTNIHLGKNFFLTTRARERSDTFINLREVLNRFKLPPGEYVLVPSTFEPHKDGDFCIRVFSEKKADYQAVDDEIEANIEEIDANEEDIDDGFRRLFVQLAGEDAEISAFELQTILRRVLAKRQDIKSDGFSIETCKIMVDMLDEDGSGKLGLKEFYILWTKIQKYQKIYREIDVDRSGTMNSYEMRKALEEAGFKLPCQLHQVIVARFADDELIIDFDNFVRCLVRLETLFKIFKQLDPENTGTIQLNLASWLSFSVL.

N-acetylalanine is present on A2. Residues 2-19 constitute a propeptide, anchors to the small subunit; sequence AGIAIKLAKDREAAEGLG. The Calpain catalytic domain occupies 45–344; sequence LFQDPSFPAL…YSRLEICNLT (300 aa). Residues I89, G91, and D96 each coordinate Ca(2+). The active site involves C105. The Ca(2+) site is built by E175, Q229, and K230. Catalysis depends on residues H262 and N286. Residues E292, D299, Q319, and E323 each contribute to the Ca(2+) site. A domain III region spans residues 345–514; the sequence is PDTLTCDSYK…KKADYQAVDD (170 aa). A linker region spans residues 515-529; it reads EIEANIEEIDANEED. The interval 530–700 is domain IV; the sequence is IDDGFRRLFV…LASWLSFSVL (171 aa). Residues A542, D545, E547, E552, D585, D587, S589, K591, E596, D615, D617, S619, T621, E626, D658, and N661 each contribute to the Ca(2+) site. 2 consecutive EF-hand domains span residues 572-605 and 602-637; these read FSIETCKIMVDMLDEDGSGKLGLKEFYILWTKIQ and TKIQKYQKIYREIDVDRSGTMNSYEMRKALEEAGFK.

Belongs to the peptidase C2 family. As to quaternary structure, forms a heterodimer with a small (regulatory) subunit (CAPNS1). Interacts with CPEB3; this leads to cleavage of CPEB3. Requires Ca(2+) as cofactor. As to expression, ubiquitous.

The protein localises to the cytoplasm. Its subcellular location is the cell membrane. It carries out the reaction Broad endopeptidase specificity.. Its activity is regulated as follows. Activated by 200-1000 micromolar concentrations of calcium and inhibited by calpastatin. Functionally, calcium-regulated non-lysosomal thiol-protease which catalyzes limited proteolysis of substrates involved in cytoskeletal remodeling and signal transduction. Proteolytically cleaves MYOC at 'Arg-226'. Proteolytically cleaves CPEB3 following neuronal stimulation which abolishes CPEB3 translational repressor activity, leading to translation of CPEB3 target mRNAs. In Mus musculus (Mouse), this protein is Calpain-2 catalytic subunit (Capn2).